The following is a 240-amino-acid chain: Large ribosomal subunit protein bL25 (240 aa).

Disordered stretches follow at residues 1–21 (MAENVLSAQKRTEQGKGPARR) and 204–240 (GAAPAAGAAAPAGGAAPAAGAAPAKGGEAKGGDKAKK). The span at 204–229 (GAAPAAGAAAPAGGAAPAAGAAPAKG) shows a compositional bias: low complexity. Positions 230–240 (GEAKGGDKAKK) are enriched in basic and acidic residues.

This sequence belongs to the bacterial ribosomal protein bL25 family. CTC subfamily. Part of the 50S ribosomal subunit; part of the 5S rRNA/L5/L18/L25 subcomplex. Contacts the 5S rRNA. Binds to the 5S rRNA independently of L5 and L18.

Functionally, this is one of the proteins that binds to the 5S RNA in the ribosome where it forms part of the central protuberance. The protein is Large ribosomal subunit protein bL25 of Anaeromyxobacter dehalogenans (strain 2CP-1 / ATCC BAA-258).